A 449-amino-acid polypeptide reads, in one-letter code: Biotin carboxylase (449 aa).

The 445-residue stretch at 1-445 (MLDKIVIANR…NIHYLEKKLG (445 aa)) folds into the Biotin carboxylation domain. Residues Lys-116, Lys-159, 165–166 (GG), 201–204 (EKYL), His-209, and His-236 each bind ATP. Residues 120–317 (IAAMKKAGVP…LIKEQLRIAA (198 aa)) enclose the ATP-grasp domain. Lys-238 serves as a coordination point for hydrogencarbonate. Glu-276 and Glu-288 together coordinate ATP. Residues Glu-276, Glu-288, and Asn-290 each contribute to the Mg(2+) site. Positions 276, 288, and 290 each coordinate Mn(2+). Hydrogencarbonate is bound by residues Arg-292, Val-295, and Arg-338. Residue Arg-292 is part of the active site. Residue Arg-338 coordinates biotin.

In terms of assembly, acetyl-CoA carboxylase is a heterohexamer of biotin carboxyl carrier protein, biotin carboxylase and the two subunits of carboxyl transferase in a 2:2 complex. It depends on Mg(2+) as a cofactor. Requires Mn(2+) as cofactor.

It catalyses the reaction N(6)-biotinyl-L-lysyl-[protein] + hydrogencarbonate + ATP = N(6)-carboxybiotinyl-L-lysyl-[protein] + ADP + phosphate + H(+). It functions in the pathway lipid metabolism; malonyl-CoA biosynthesis; malonyl-CoA from acetyl-CoA: step 1/1. Functionally, this protein is a component of the acetyl coenzyme A carboxylase complex; first, biotin carboxylase catalyzes the carboxylation of the carrier protein and then the transcarboxylase transfers the carboxyl group to form malonyl-CoA. The chain is Biotin carboxylase (accC) from Escherichia coli O157:H7.